The primary structure comprises 638 residues: Acetolactate synthase 2, chloroplastic (638 aa).

The N-terminal 39 residues, 1–39 (MATAATAAAALTGATTATPKSRRRAHHLATRRALAAPIR), are a transit peptide targeting the chloroplast. Residues 44-67 (SRATPTAPPATPLRPWGPNEPRKG) are disordered. Residue E112 coordinates thiamine diphosphate. Residues C132 and C278 are joined by a disulfide bond. Residues R214, 320-341 (HGTV…FGVR), and 363-382 (DIDP…ICAD) each bind FAD. Positions 455–535 (QHQMWAAQYY…VKVFVLNNQH (81 aa)) are thiamine pyrophosphate binding. Mg(2+)-binding residues include D506 and N533.

It belongs to the TPP enzyme family. It depends on Mg(2+) as a cofactor. Requires thiamine diphosphate as cofactor.

It localises to the plastid. Its subcellular location is the chloroplast. The enzyme catalyses 2 pyruvate + H(+) = (2S)-2-acetolactate + CO2. The protein operates within amino-acid biosynthesis; L-isoleucine biosynthesis; L-isoleucine from 2-oxobutanoate: step 1/4. It participates in amino-acid biosynthesis; L-valine biosynthesis; L-valine from pyruvate: step 1/4. The protein is Acetolactate synthase 2, chloroplastic (ALS2) of Zea mays (Maize).